A 290-amino-acid polypeptide reads, in one-letter code: N-acetylmannosamine kinase (290 aa).

ATP is bound by residues 5–12 (AIDIGGTK) and 132–139 (GVGGGVVS). Histidine 156, cysteine 166, cysteine 168, and cysteine 173 together coordinate Zn(2+).

This sequence belongs to the ROK (NagC/XylR) family. NanK subfamily. Homodimer.

It catalyses the reaction an N-acyl-D-mannosamine + ATP = an N-acyl-D-mannosamine 6-phosphate + ADP + H(+). Its pathway is amino-sugar metabolism; N-acetylneuraminate degradation; D-fructose 6-phosphate from N-acetylneuraminate: step 2/5. In terms of biological role, catalyzes the phosphorylation of N-acetylmannosamine (ManNAc) to ManNAc-6-P. This chain is N-acetylmannosamine kinase, found in Citrobacter koseri (strain ATCC BAA-895 / CDC 4225-83 / SGSC4696).